A 391-amino-acid chain; its full sequence is Putative glutamate--cysteine ligase 2-2 (391 aa).

Belongs to the glutamate--cysteine ligase type 2 family. YbdK subfamily.

It catalyses the reaction L-cysteine + L-glutamate + ATP = gamma-L-glutamyl-L-cysteine + ADP + phosphate + H(+). In terms of biological role, ATP-dependent carboxylate-amine ligase which exhibits weak glutamate--cysteine ligase activity. In Saccharopolyspora erythraea (strain ATCC 11635 / DSM 40517 / JCM 4748 / NBRC 13426 / NCIMB 8594 / NRRL 2338), this protein is Putative glutamate--cysteine ligase 2-2.